A 285-amino-acid chain; its full sequence is 2-dehydro-3-deoxyphosphooctonate aldolase (285 aa).

This sequence belongs to the KdsA family.

The protein resides in the cytoplasm. It carries out the reaction D-arabinose 5-phosphate + phosphoenolpyruvate + H2O = 3-deoxy-alpha-D-manno-2-octulosonate-8-phosphate + phosphate. Its pathway is carbohydrate biosynthesis; 3-deoxy-D-manno-octulosonate biosynthesis; 3-deoxy-D-manno-octulosonate from D-ribulose 5-phosphate: step 2/3. The protein operates within bacterial outer membrane biogenesis; lipopolysaccharide biosynthesis. The polypeptide is 2-dehydro-3-deoxyphosphooctonate aldolase (Variovorax paradoxus (strain S110)).